Here is a 76-residue protein sequence, read N- to C-terminus: EMBRYO SURROUNDING FACTOR 1-like protein 8 (76 aa).

Positions 1–22 are cleaved as a signal peptide; sequence MSSSQFFILCIILISSFPLHEC. Intrachain disulfides connect cysteine 38–cysteine 54, cysteine 43–cysteine 74, cysteine 52–cysteine 70, and cysteine 55–cysteine 63.

Belongs to the MEG family. In terms of tissue distribution, expressed in flowers.

The protein is EMBRYO SURROUNDING FACTOR 1-like protein 8 (ESFL8) of Arabidopsis thaliana (Mouse-ear cress).